A 242-amino-acid chain; its full sequence is Uridylate kinase (242 aa).

15 to 18 (KLSG) contacts ATP. G57 is a UMP binding site. ATP contacts are provided by G58 and R62. UMP-binding positions include D78 and 139–146 (TGNPFFTT). The ATP site is built by T166, Y172, and D175.

The protein belongs to the UMP kinase family. Homohexamer.

Its subcellular location is the cytoplasm. It catalyses the reaction UMP + ATP = UDP + ADP. The protein operates within pyrimidine metabolism; CTP biosynthesis via de novo pathway; UDP from UMP (UMPK route): step 1/1. With respect to regulation, inhibited by UTP. Its function is as follows. Catalyzes the reversible phosphorylation of UMP to UDP. The protein is Uridylate kinase of Acinetobacter baumannii (strain ATCC 17978 / DSM 105126 / CIP 53.77 / LMG 1025 / NCDC KC755 / 5377).